A 209-amino-acid chain; its full sequence is Protein TIFY 11c (209 aa).

A Tify domain is found at glutamate 93 to serine 128. The short motif at proline 153–leucine 177 is the Jas element. Positions alanine 155 to arginine 162 match the Nuclear localization signal motif. The interval glutamate 175 to leucine 209 is disordered. Residues glutamate 179–glycine 196 show a composition bias toward basic and acidic residues.

Belongs to the TIFY/JAZ family. Post-translationally, ubiquitinated. Targeted for degradation by the SCF(COI1) E3 ubiquitin ligase-proteasome pathway during jasmonate signaling.

It is found in the nucleus. Its function is as follows. Repressor of jasmonate responses. In Oryza sativa subsp. indica (Rice), this protein is Protein TIFY 11c.